A 593-amino-acid polypeptide reads, in one-letter code: Probable ubiquitin carboxyl-terminal hydrolase 4 (593 aa).

A USP domain is found at 227–573 (IGLTNLGNTC…SSYILFYKRS (347 aa)). The Nucleophile role is filled by C236. Phosphoserine occurs at positions 338 and 343. H530 functions as the Proton acceptor in the catalytic mechanism.

Belongs to the peptidase C19 family. Interacts with sfp47.

The protein localises to the cytoplasm. It is found in the endosome. The enzyme catalyses Thiol-dependent hydrolysis of ester, thioester, amide, peptide and isopeptide bonds formed by the C-terminal Gly of ubiquitin (a 76-residue protein attached to proteins as an intracellular targeting signal).. Its function is as follows. Has an ATP-independent isopeptidase activity, cleaving at the C-terminus of the ubiquitin moiety. Acts late in the proteolytic pathway in conjunction with the 26S proteasome. Plays a role in avoiding DNA overreplication. The protein is Probable ubiquitin carboxyl-terminal hydrolase 4 (ubp4) of Schizosaccharomyces pombe (strain 972 / ATCC 24843) (Fission yeast).